The sequence spans 268 residues: Endonuclease 8 1 (268 aa).

Pro-2 acts as the Schiff-base intermediate with DNA in catalysis. The active-site Proton donor is the Glu-3. Residue Lys-52 is the Proton donor; for beta-elimination activity of the active site. Residues Arg-125 and Asn-166 each contribute to the DNA site. Residues 234–268 (YVYRRAGEPCRVCGGVIRTALLEGRNVFWCPVCQT) form an FPG-type zinc finger. The active-site Proton donor; for delta-elimination activity is Arg-258.

Belongs to the FPG family. The cofactor is Zn(2+).

It carries out the reaction 2'-deoxyribonucleotide-(2'-deoxyribose 5'-phosphate)-2'-deoxyribonucleotide-DNA = a 3'-end 2'-deoxyribonucleotide-(2,3-dehydro-2,3-deoxyribose 5'-phosphate)-DNA + a 5'-end 5'-phospho-2'-deoxyribonucleoside-DNA + H(+). Functionally, involved in base excision repair of DNA damaged by oxidation or by mutagenic agents. Acts as a DNA glycosylase that recognizes and removes damaged bases. Has AP (apurinic/apyrimidinic) lyase activity and introduces nicks in the DNA strand. Cleaves the DNA backbone by beta-delta elimination to generate a single-strand break at the site of the removed base with both 3'- and 5'-phosphates. In Mycobacterium bovis (strain ATCC BAA-935 / AF2122/97), this protein is Endonuclease 8 1 (nei1).